A 593-amino-acid polypeptide reads, in one-letter code: Auxin response factor 12 (593 aa).

Positions 126–228 (FTKVLTASDT…ELRVGIRRAR (103 aa)) form a DNA-binding region, TF-B3. The region spanning 511–592 (RTCTKVQMQG…MVKKIFIQKR (82 aa)) is the PB1 domain.

It belongs to the ARF family. As to quaternary structure, homodimers and heterodimers.

It is found in the nucleus. In terms of biological role, auxin response factors (ARFs) are transcriptional factors that bind specifically to the DNA sequence 5'-TGTCTC-3' found in the auxin-responsive promoter elements (AuxREs). Could act as transcriptional activator or repressor. Formation of heterodimers with Aux/IAA proteins may alter their ability to modulate early auxin response genes expression. The polypeptide is Auxin response factor 12 (ARF12) (Arabidopsis thaliana (Mouse-ear cress)).